The sequence spans 284 residues: 2-dehydro-3-deoxyphosphooctonate aldolase (284 aa).

This sequence belongs to the KdsA family.

Its subcellular location is the cytoplasm. It catalyses the reaction D-arabinose 5-phosphate + phosphoenolpyruvate + H2O = 3-deoxy-alpha-D-manno-2-octulosonate-8-phosphate + phosphate. It functions in the pathway carbohydrate biosynthesis; 3-deoxy-D-manno-octulosonate biosynthesis; 3-deoxy-D-manno-octulosonate from D-ribulose 5-phosphate: step 2/3. The protein operates within bacterial outer membrane biogenesis; lipopolysaccharide biosynthesis. This is 2-dehydro-3-deoxyphosphooctonate aldolase from Escherichia coli O6:K15:H31 (strain 536 / UPEC).